Consider the following 240-residue polypeptide: Dihydromonapterin reductase (240 aa).

The active-site Proton acceptor is the Tyr-152.

The protein belongs to the short-chain dehydrogenases/reductases (SDR) family. FolM subfamily.

The catalysed reaction is (6S)-5,6,7,8-tetrahydrofolate + NADP(+) = 7,8-dihydrofolate + NADPH + H(+). It catalyses the reaction 7,8-dihydromonapterin + NADPH + H(+) = 5,6,7,8-tetrahydromonapterin + NADP(+). Catalyzes the reduction of dihydromonapterin to tetrahydromonapterin. Also has lower activity with dihydrofolate. The protein is Dihydromonapterin reductase (folM) of Escherichia coli O139:H28 (strain E24377A / ETEC).